The primary structure comprises 184 residues: Major fimbrial subunit (184 aa).

The signal sequence occupies residues 1-22; the sequence is MKLSKIALAAALVFGINSVATA. Cysteine 49 and cysteine 88 form a disulfide bridge.

It belongs to the fimbrial protein family.

Its subcellular location is the fimbrium. In terms of biological role, major structural component of PMF fimbriae. The polypeptide is Major fimbrial subunit (pmfA) (Proteus mirabilis (strain HI4320)).